The sequence spans 207 residues: Thiamine-phosphate synthase (207 aa).

Residues 37 to 41 and Asn69 each bind 4-amino-2-methyl-5-(diphosphooxymethyl)pyrimidine; that span reads QLREK. Mg(2+) contacts are provided by Asp70 and Asp89. Ser108 is a 4-amino-2-methyl-5-(diphosphooxymethyl)pyrimidine binding site. A 2-[(2R,5Z)-2-carboxy-4-methylthiazol-5(2H)-ylidene]ethyl phosphate-binding site is contributed by 134 to 136; it reads TGS. Lys137 is a binding site for 4-amino-2-methyl-5-(diphosphooxymethyl)pyrimidine. 2-[(2R,5Z)-2-carboxy-4-methylthiazol-5(2H)-ylidene]ethyl phosphate-binding positions include Gly165 and 185-186; that span reads IS.

Belongs to the thiamine-phosphate synthase family. It depends on Mg(2+) as a cofactor.

The enzyme catalyses 2-[(2R,5Z)-2-carboxy-4-methylthiazol-5(2H)-ylidene]ethyl phosphate + 4-amino-2-methyl-5-(diphosphooxymethyl)pyrimidine + 2 H(+) = thiamine phosphate + CO2 + diphosphate. It carries out the reaction 2-(2-carboxy-4-methylthiazol-5-yl)ethyl phosphate + 4-amino-2-methyl-5-(diphosphooxymethyl)pyrimidine + 2 H(+) = thiamine phosphate + CO2 + diphosphate. It catalyses the reaction 4-methyl-5-(2-phosphooxyethyl)-thiazole + 4-amino-2-methyl-5-(diphosphooxymethyl)pyrimidine + H(+) = thiamine phosphate + diphosphate. The protein operates within cofactor biosynthesis; thiamine diphosphate biosynthesis; thiamine phosphate from 4-amino-2-methyl-5-diphosphomethylpyrimidine and 4-methyl-5-(2-phosphoethyl)-thiazole: step 1/1. Condenses 4-methyl-5-(beta-hydroxyethyl)thiazole monophosphate (THZ-P) and 2-methyl-4-amino-5-hydroxymethyl pyrimidine pyrophosphate (HMP-PP) to form thiamine monophosphate (TMP). This chain is Thiamine-phosphate synthase, found in Desulfitobacterium hafniense (strain Y51).